Consider the following 175-residue polypeptide: NAD(P)H-quinone oxidoreductase subunit J (175 aa).

Belongs to the complex I 30 kDa subunit family. In terms of assembly, NDH-1 can be composed of about 15 different subunits; different subcomplexes with different compositions have been identified which probably have different functions.

It is found in the cellular thylakoid membrane. It catalyses the reaction a plastoquinone + NADH + (n+1) H(+)(in) = a plastoquinol + NAD(+) + n H(+)(out). The catalysed reaction is a plastoquinone + NADPH + (n+1) H(+)(in) = a plastoquinol + NADP(+) + n H(+)(out). In terms of biological role, NDH-1 shuttles electrons from an unknown electron donor, via FMN and iron-sulfur (Fe-S) centers, to quinones in the respiratory and/or the photosynthetic chain. The immediate electron acceptor for the enzyme in this species is believed to be plastoquinone. Couples the redox reaction to proton translocation, and thus conserves the redox energy in a proton gradient. Cyanobacterial NDH-1 also plays a role in inorganic carbon-concentration. The protein is NAD(P)H-quinone oxidoreductase subunit J of Trichormus variabilis (strain ATCC 29413 / PCC 7937) (Anabaena variabilis).